A 355-amino-acid polypeptide reads, in one-letter code: UDP-N-acetylglucosamine--N-acetylmuramyl-(pentapeptide) pyrophosphoryl-undecaprenol N-acetylglucosamine transferase (355 aa).

UDP-N-acetyl-alpha-D-glucosamine-binding positions include 12–14, Asn-124, Arg-163, Ser-191, Ile-243, 262–267, and Gln-288; these read TGG and ALTVAE.

Belongs to the glycosyltransferase 28 family. MurG subfamily.

The protein resides in the cell inner membrane. The catalysed reaction is di-trans,octa-cis-undecaprenyl diphospho-N-acetyl-alpha-D-muramoyl-L-alanyl-D-glutamyl-meso-2,6-diaminopimeloyl-D-alanyl-D-alanine + UDP-N-acetyl-alpha-D-glucosamine = di-trans,octa-cis-undecaprenyl diphospho-[N-acetyl-alpha-D-glucosaminyl-(1-&gt;4)]-N-acetyl-alpha-D-muramoyl-L-alanyl-D-glutamyl-meso-2,6-diaminopimeloyl-D-alanyl-D-alanine + UDP + H(+). It participates in cell wall biogenesis; peptidoglycan biosynthesis. Cell wall formation. Catalyzes the transfer of a GlcNAc subunit on undecaprenyl-pyrophosphoryl-MurNAc-pentapeptide (lipid intermediate I) to form undecaprenyl-pyrophosphoryl-MurNAc-(pentapeptide)GlcNAc (lipid intermediate II). The protein is UDP-N-acetylglucosamine--N-acetylmuramyl-(pentapeptide) pyrophosphoryl-undecaprenol N-acetylglucosamine transferase of Tolumonas auensis (strain DSM 9187 / NBRC 110442 / TA 4).